The chain runs to 290 residues: ATP synthase gamma chain (290 aa).

Belongs to the ATPase gamma chain family. As to quaternary structure, F-type ATPases have 2 components, CF(1) - the catalytic core - and CF(0) - the membrane proton channel. CF(1) has five subunits: alpha(3), beta(3), gamma(1), delta(1), epsilon(1). CF(0) has three main subunits: a, b and c.

It is found in the cell inner membrane. In terms of biological role, produces ATP from ADP in the presence of a proton gradient across the membrane. The gamma chain is believed to be important in regulating ATPase activity and the flow of protons through the CF(0) complex. This chain is ATP synthase gamma chain, found in Dinoroseobacter shibae (strain DSM 16493 / NCIMB 14021 / DFL 12).